We begin with the raw amino-acid sequence, 465 residues long: Putative multidrug resistance protein MdtD (465 aa).

The next 13 membrane-spanning stretches (helical) occupy residues 12-32 (LWIVAFGFFMQTLDTTIVNTA), 49-69 (SVIVSYVLTVAVMLPASGWLA), 72-92 (IGVKWVFFSAIILFTFGSLMC), 102-124 (ILSRVLQGVGGAMMVPVGRLTVM), 138-158 (FVTLPGQIGPLVGPALGGFLV), 165-185 (WIFLINLPVGVIGALATLLLM), 195-215 (FDISGFIMLAIGMATLTLALD), 219-239 (GLGLSPLAIAGLILCGVIALG), 267-287 (LVGSMSARIGSGMLPFMTPIF), 290-310 (IGLGFSPFHAGLMMIPMIIGS), 342-362 (LSLPLVAIMGWTLLMPVVLFF), 393-413 (LLSMAMQLSMSIGVSTAGILL), and 430-450 (SAFLYSYLCMAIIIALPALIF).

It belongs to the major facilitator superfamily. TCR/Tet family.

It localises to the cell inner membrane. In Yersinia pseudotuberculosis serotype O:1b (strain IP 31758), this protein is Putative multidrug resistance protein MdtD.